The sequence spans 522 residues: Serine/threonine protein phosphatase 2A 59 kDa regulatory subunit B' gamma isoform (522 aa).

The disordered stretch occupies residues 1 to 74; the sequence is MIKQIFGKLP…SSTSSNRTNQ (74 aa). Positions 35-58 are enriched in low complexity; sequence PNSGISSISKPSSKSSASNSNGAN. Positions 63–74 are enriched in polar residues; the sequence is APSSTSSNRTNQ.

The protein belongs to the phosphatase 2A regulatory subunit B56 family. In terms of assembly, PP2A consists of a common heteromeric enzyme, composed of a catalytic subunit (subunits C), a constant regulatory subunit (subunit A), and a variety of regulatory subunits such as subunits B (the R2/B/PR55/B55, R3/B''/PR72/PR130/PR59 and R5/B'/B56 families). Interacts with BRI1. Interacts with IGMT1 and IGMT4. Interacts with ACO3 in the cytosol. As to expression, expressed ubiquitously at low levels. Expressed in roots, emerging lateral roots, cotyledons, leaves, floral stalks and flowers.

The protein resides in the cytoplasm. It localises to the cytosol. It is found in the nucleus. The B regulatory subunit may modulate substrate selectivity and catalytic activity, and may also direct the localization of the catalytic enzyme to a particular subcellular compartment. Required for the formation of the PP2A holoenzyme that negatively regulates brassinosteroid signaling by dephosphorylating and inactivating BRI1 in the cytoplasm. Seems to be functionally connected with CPR5 and may mediate the negative regulation of defense reactions and senescence under low irradiances. May contribute to the epigenetic regulation of defense gene expression. Involved in the control of methoxylation of indole glucosinolates and formation of 4-methoxy- indol-3-yl-methyl glucosinolate in leaves, through direct interaction with indole glucosinolate methyltransferases. Involved in growth regulation and stress signaling. Involved in the regulation of reactive oxygen species (ROS) signaling and maintenance of cellular ROS homeostasis. Required to control the level of ACO3 phosphorylation in the cytoplasm. Regulates hydrogen peroxide metabolism by controlling the abundance of AOX1A and AXO3/AOX1D in leaf mitochondria. May mediate dephosphorylation of CRT1 and promote the degradation of unfolded proteins in endoplasmic reticulum (ER). Involved in the regulation of flowering time by repressing FLC, the main flowering repressor gene. The sequence is that of Serine/threonine protein phosphatase 2A 59 kDa regulatory subunit B' gamma isoform (B'GAMMA) from Arabidopsis thaliana (Mouse-ear cress).